A 184-amino-acid chain; its full sequence is Ribosome maturation factor RimM (184 aa).

The PRC barrel domain occupies 101–180 (DGEFFYCDLV…KITTNNAKTL (80 aa)).

It belongs to the RimM family. Binds ribosomal protein uS19.

It is found in the cytoplasm. Functionally, an accessory protein needed during the final step in the assembly of 30S ribosomal subunit, possibly for assembly of the head region. Essential for efficient processing of 16S rRNA. May be needed both before and after RbfA during the maturation of 16S rRNA. It has affinity for free ribosomal 30S subunits but not for 70S ribosomes. This Helicobacter pylori (strain Shi470) protein is Ribosome maturation factor RimM.